The sequence spans 843 residues: Probable cleavage and polyadenylation specificity factor subunit 2 (843 aa).

The span at 414–425 (AEETRLRMERAR) shows a compositional bias: basic and acidic residues. 2 disordered regions span residues 414-443 (AEET…DIAA) and 691-753 (DKNR…TKGK). The span at 432–441 (ESDDSDDDDI) shows a compositional bias: acidic residues. Positions 732–746 (SGKEVENGHTNDSRT) are enriched in basic and acidic residues.

The protein belongs to the metallo-beta-lactamase superfamily. RNA-metabolizing metallo-beta-lactamase-like family. CPSF2/YSH1 subfamily. In terms of assembly, CPSF is a heterotetramer composed of four distinct subunits 160, 100, 70 and 30 kDa.

It is found in the nucleus. Functionally, CPSF plays a key role in pre-mRNA 3'-end formation, recognizing the AAUAAA signal sequence and interacting with poly(A)polymerase and other factors to bring about cleavage and poly(A) addition. The protein is Probable cleavage and polyadenylation specificity factor subunit 2 (cpsf-2) of Caenorhabditis elegans.